A 515-amino-acid polypeptide reads, in one-letter code: Meiotically up-regulated gene 68 protein (515 aa).

The segment at 165 to 204 is disordered; that stretch reads LHSIESERNESSLSLDSGESEKKSEEDNGNGEQNYIPEQY.

In terms of biological role, has a role in meiosis. The polypeptide is Meiotically up-regulated gene 68 protein (mug68) (Schizosaccharomyces pombe (strain 972 / ATCC 24843) (Fission yeast)).